Reading from the N-terminus, the 211-residue chain is Large ribosomal subunit protein eL13 (211 aa).

This sequence belongs to the eukaryotic ribosomal protein eL13 family. Component of the 60S large ribosomal subunit (LSU).

The protein localises to the cytoplasm. In terms of biological role, component of the ribosome, a large ribonucleoprotein complex responsible for the synthesis of proteins in the cell. The small ribosomal subunit (SSU) binds messenger RNAs (mRNAs) and translates the encoded message by selecting cognate aminoacyl-transfer RNA (tRNA) molecules. The large subunit (LSU) contains the ribosomal catalytic site termed the peptidyl transferase center (PTC), which catalyzes the formation of peptide bonds, thereby polymerizing the amino acids delivered by tRNAs into a polypeptide chain. The nascent polypeptides leave the ribosome through a tunnel in the LSU and interact with protein factors that function in enzymatic processing, targeting, and the membrane insertion of nascent chains at the exit of the ribosomal tunnel. As part of the LSU, it is probably required for its formation and the maturation of rRNAs. The chain is Large ribosomal subunit protein eL13 (rpl13) from Danio rerio (Zebrafish).